The following is a 210-amino-acid chain: uncharacterized protein (210 aa).

A compositionally biased stretch (low complexity) spans 101–114 (QELPEPSSPQSQSS). The interval 101–166 (QELPEPSSPQ…SSGVSSDLQK (66 aa)) is disordered. Over residues 147–164 (RSTSPVTASTSSGVSSDL) the composition is skewed to polar residues.

This is an uncharacterized protein from Alcelaphine herpesvirus 1 (strain C500) (AlHV-1).